Consider the following 529-residue polypeptide: E3 ubiquitin-protein ligase arih1 (529 aa).

Disordered regions lie at residues 1–30 (MDSD…EDDL) and 49–68 (GICG…GEEE). Over residues 51 to 64 (CGEGGGSALGPGPG) the composition is skewed to gly residues. Residues 77-125 (TAEQILQHMVECIREVNEVIQNPATITRILLSHFNWDKEKLMERYFDGN) are UBA-like. The TRIAD supradomain stretch occupies residues 154 to 365 (QDMPCQICYL…SAWYNCNRYN (212 aa)). Cys158, Cys161, Cys175, His177, Cys180, Cys183, Cys203, Cys208, Cys248, Cys253, Cys269, Cys271, Cys276, Cys279, His284, Cys289, Cys316, and Cys319 together coordinate Zn(2+). Residues 158–208 (CQICYLNYPNSYFTGLECGHKFCMQCWSEYLTTKIIEEGMGQTISCPAHGC) form an RING-type 1 zinc finger. The IBR-type zinc finger occupies 228-289 (LKYQHLITNS…GENWHDPVKC (62 aa)). An RING-type 2; atypical zinc finger spans residues 316–347 (CPKCHVTIEKDGGCNHMVCRNQNCKAEFCWVC). Residue Cys329 is part of the active site. The Zn(2+) site is built by Cys334, Cys339, Cys344, Cys347, His354, and Cys361. Positions 380 to 529 (RAALQRYLFY…EKDLWEYIED (150 aa)) are ariadne domain.

It belongs to the RBR family. Ariadne subfamily. As to quaternary structure, interacts (via the first RING-type zinc finger) with ube2l3. Associates with cullin-RING ubiquitin ligase (CRL) complexes containing neddylated cullin.

Its subcellular location is the cytoplasm. It is found in the nucleus. The enzyme catalyses [E2 ubiquitin-conjugating enzyme]-S-ubiquitinyl-L-cysteine + [acceptor protein]-L-lysine = [E2 ubiquitin-conjugating enzyme]-L-cysteine + [acceptor protein]-N(6)-ubiquitinyl-L-lysine.. It participates in protein modification; protein ubiquitination. With respect to regulation, autoinhibited by the ariadne domain, which masks the second RING-type zinc finger that contains the active site and inhibits the E3 activity. Inhibition is relieved upon binding to neddylated cullin-RING ubiquitin ligase complexes, which activate the E3 ligase activity of ARIH1. E3 ubiquitin-protein ligase, which catalyzes ubiquitination of target proteins together with ubiquitin-conjugating enzyme E2 ube2l3. Acts as an atypical E3 ubiquitin-protein ligase by working together with cullin-RING ubiquitin ligase (CRL) complexes and initiating ubiquitination of CRL substrates: associates with CRL complexes and specifically mediates addition of the first ubiquitin on CRLs targets. The initial ubiquitin is then elongated. E3 ubiquitin-protein ligase activity is activated upon binding to neddylated cullin-RING ubiquitin ligase complexes. The sequence is that of E3 ubiquitin-protein ligase arih1 (arih1) from Xenopus tropicalis (Western clawed frog).